We begin with the raw amino-acid sequence, 156 residues long: MNLNATLFAQMVVFLILAWFTMKFVWPPLINALDERSKKIADGLSAAEKGKLELEAAHKRVDQELSQARNEGQQRIADAEKRAVAVADEIKAQAQAEAARIIAQAKADADQQIVKAREALRGEVAALAVKGAEQILKREVDQAAHADLLNQLKAEL.

A helical transmembrane segment spans residues 7 to 27 (LFAQMVVFLILAWFTMKFVWP).

It belongs to the ATPase B chain family. As to quaternary structure, F-type ATPases have 2 components, F(1) - the catalytic core - and F(0) - the membrane proton channel. F(1) has five subunits: alpha(3), beta(3), gamma(1), delta(1), epsilon(1). F(0) has three main subunits: a(1), b(2) and c(10-14). The alpha and beta chains form an alternating ring which encloses part of the gamma chain. F(1) is attached to F(0) by a central stalk formed by the gamma and epsilon chains, while a peripheral stalk is formed by the delta and b chains.

It is found in the cell inner membrane. Functionally, f(1)F(0) ATP synthase produces ATP from ADP in the presence of a proton or sodium gradient. F-type ATPases consist of two structural domains, F(1) containing the extramembraneous catalytic core and F(0) containing the membrane proton channel, linked together by a central stalk and a peripheral stalk. During catalysis, ATP synthesis in the catalytic domain of F(1) is coupled via a rotary mechanism of the central stalk subunits to proton translocation. Component of the F(0) channel, it forms part of the peripheral stalk, linking F(1) to F(0). The polypeptide is ATP synthase subunit b (Paraburkholderia phymatum (strain DSM 17167 / CIP 108236 / LMG 21445 / STM815) (Burkholderia phymatum)).